The primary structure comprises 352 residues: Probable gamma-glutamyl hydrolase 3 (352 aa).

The first 19 residues, 1–19 (MWRFCFFLSLLFFDVSAVK), serve as a signal peptide directing secretion. Positions 49 to 352 (AADPNLNYKP…SGDDEVYIFT (304 aa)) constitute a Gamma-glutamyl hydrolase domain. Residue cysteine 166 is the Nucleophile of the active site. Residue histidine 279 is part of the active site.

It belongs to the peptidase C26 family.

Its subcellular location is the vacuole. It is found in the secreted. It localises to the extracellular space. The protein localises to the cell wall. It catalyses the reaction (6S)-5,6,7,8-tetrahydrofolyl-(gamma-L-Glu)(n) + (n-1) H2O = (6S)-5,6,7,8-tetrahydrofolate + (n-1) L-glutamate. Its function is as follows. Cleaves the polyglutamate sidechains of folate polyglutamates in the vacuole. Is important for polyglutamyl tail length determination before vacuolar exit. Plays a role on folate stability and intracellular folate content. This chain is Probable gamma-glutamyl hydrolase 3 (GGH3), found in Arabidopsis thaliana (Mouse-ear cress).